The following is a 684-amino-acid chain: Soluble guanylate cyclase gcy-32 (684 aa).

Residue histidine 105 coordinates heme. The stretch at 396–432 (DVEVNLQLEANNEQLETMTRELELERQKTDSILKDML) forms a coiled coil. One can recognise a Guanylate cyclase domain in the interval 454–582 (TVMFCDLPAF…ETVTLASQME (129 aa)). Mg(2+) contacts are provided by aspartate 459 and aspartate 503.

It belongs to the adenylyl cyclase class-4/guanylyl cyclase family. As to quaternary structure, heterodimer; with other soluble guanylate cyclases. Heme is required as a cofactor. In terms of tissue distribution, expressed in a small number of neurons, corresponding to URX, AQR and PQR neurons.

It localises to the cytoplasm. The catalysed reaction is GTP = 3',5'-cyclic GMP + diphosphate. May be regulated by molecular oxygen. Probably not activated by nitric oxide (NO). Functionally, synthesizes cyclic GMP (cGMP) from GTP. Influences aerotaxis responses, aggregation and bordering behaviors (gathering around the edge of a bacterial lawn) in combination with other soluble guanylate cyclases. The sequence is that of Soluble guanylate cyclase gcy-32 (gcy-32) from Caenorhabditis elegans.